A 293-amino-acid chain; its full sequence is Acetylglutamate kinase (293 aa).

Substrate is bound by residues Gly67–Gly68, Arg89, and Asn190.

It belongs to the acetylglutamate kinase family. ArgB subfamily.

It is found in the cytoplasm. It catalyses the reaction N-acetyl-L-glutamate + ATP = N-acetyl-L-glutamyl 5-phosphate + ADP. The protein operates within amino-acid biosynthesis; L-arginine biosynthesis; N(2)-acetyl-L-ornithine from L-glutamate: step 2/4. Catalyzes the ATP-dependent phosphorylation of N-acetyl-L-glutamate. In Nitrosospira multiformis (strain ATCC 25196 / NCIMB 11849 / C 71), this protein is Acetylglutamate kinase.